Consider the following 382-residue polypeptide: Type 2 DNA topoisomerase 6 subunit A (382 aa).

The Topo IIA-type catalytic domain maps to 14-155; sequence YDPQKVLKKL…MHITADRRGY (142 aa). Tyr-108 functions as the O-(5'-phospho-DNA)-tyrosine intermediate in the catalytic mechanism. Mg(2+) is bound by residues Glu-202 and Asp-254.

It belongs to the TOP6A family. In terms of assembly, homodimer. Heterotetramer of two Top6A and two Top6B chains. Requires Mg(2+) as cofactor.

The enzyme catalyses ATP-dependent breakage, passage and rejoining of double-stranded DNA.. Its function is as follows. Relaxes both positive and negative superturns and exhibits a strong decatenase activity. The protein is Type 2 DNA topoisomerase 6 subunit A of Pyrococcus horikoshii (strain ATCC 700860 / DSM 12428 / JCM 9974 / NBRC 100139 / OT-3).